A 330-amino-acid polypeptide reads, in one-letter code: Ferredoxin--NADP reductase (330 aa).

Residues E35, Q43, Y48, V90, F123, D285, and T326 each contribute to the FAD site.

Belongs to the ferredoxin--NADP reductase type 2 family. Homodimer. It depends on FAD as a cofactor.

It catalyses the reaction 2 reduced [2Fe-2S]-[ferredoxin] + NADP(+) + H(+) = 2 oxidized [2Fe-2S]-[ferredoxin] + NADPH. The chain is Ferredoxin--NADP reductase from Streptococcus pyogenes serotype M6 (strain ATCC BAA-946 / MGAS10394).